The following is a 159-amino-acid chain: MTTPLCYSSPVNTPLSPSLLLLSLLLLLSTICGVLPLSLFCCGIGTGITLFNFDDTSDIIAVDIASAICFIIFCNGFCCCCCSGDPPYASSTTSLAICDGMLSLLRGDPPPVAVTYAPIFIAFCMHNSMSLIESKSGLTAFLTRVTMTSSMLPFSSIIS.

2 helical membrane passes run 20–40 and 59–79; these read LLLS…LSLF and IIAV…GFCC. Positions 106 to 108 match the Cell attachment site motif; the sequence is RGD.

It is found in the host membrane. The sequence is that of Putative transmembrane protein ORF159 from Acidianus sp. F28 (AFV-2).